The chain runs to 188 residues: Adenine phosphoribosyltransferase (188 aa).

It belongs to the purine/pyrimidine phosphoribosyltransferase family. As to quaternary structure, homodimer.

It is found in the cytoplasm. It catalyses the reaction AMP + diphosphate = 5-phospho-alpha-D-ribose 1-diphosphate + adenine. It functions in the pathway purine metabolism; AMP biosynthesis via salvage pathway; AMP from adenine: step 1/1. Functionally, catalyzes a salvage reaction resulting in the formation of AMP, that is energically less costly than de novo synthesis. The sequence is that of Adenine phosphoribosyltransferase from Neisseria meningitidis serogroup B (strain ATCC BAA-335 / MC58).